The following is a 231-amino-acid chain: uncharacterized protein (231 aa).

This is an uncharacterized protein from Mycobacterium tuberculosis (strain ATCC 25618 / H37Rv).